Here is a 296-residue protein sequence, read N- to C-terminus: Large ribosomal subunit protein uL15m (296 aa).

The transit peptide at M1–R20 directs the protein to the mitochondrion. Residues N25–G66 are disordered. Basic residues predominate over residues A32–G52.

This sequence belongs to the universal ribosomal protein uL15 family. As to quaternary structure, component of the mitochondrial ribosome large subunit (39S) which comprises a 16S rRNA and about 50 distinct proteins.

It localises to the mitochondrion. In Xenopus laevis (African clawed frog), this protein is Large ribosomal subunit protein uL15m (mrpl15).